A 251-amino-acid chain; its full sequence is MIELGVNIDHIATIRQARRTYEPDPVWGAVEAHLGGADGITVHLREDRRHIQDSDVRRLRETTQIKLNLEMAATDEMVGIACGLKPEMAMLVPEGRHEVTTEGGLDILAQEARLKGVISRLADAGIVTSVFIDADPEQIEAAARIGASVCEIHTGPYAHAFYDKGRDAEAPAVLAEIAKIRKAGQTIRHLGMRFNAGHALNYYNVQPLARLAGIRELHIGHAIVSRAVFVGLREAVREMKVLMREAAERGE.

Asn-7 provides a ligand contact to 3-amino-2-oxopropyl phosphate. 9 to 10 (DH) lines the 1-deoxy-D-xylulose 5-phosphate pocket. Arg-18 serves as a coordination point for 3-amino-2-oxopropyl phosphate. Catalysis depends on His-43, which acts as the Proton acceptor. Arg-45 and His-50 together coordinate 1-deoxy-D-xylulose 5-phosphate. Glu-70 acts as the Proton acceptor in catalysis. Residue Thr-100 coordinates 1-deoxy-D-xylulose 5-phosphate. His-198 serves as the catalytic Proton donor. 3-amino-2-oxopropyl phosphate is bound by residues Ala-199 and 220-221 (GH).

The protein belongs to the PNP synthase family. As to quaternary structure, homooctamer; tetramer of dimers.

It localises to the cytoplasm. It catalyses the reaction 3-amino-2-oxopropyl phosphate + 1-deoxy-D-xylulose 5-phosphate = pyridoxine 5'-phosphate + phosphate + 2 H2O + H(+). It functions in the pathway cofactor biosynthesis; pyridoxine 5'-phosphate biosynthesis; pyridoxine 5'-phosphate from D-erythrose 4-phosphate: step 5/5. In terms of biological role, catalyzes the complicated ring closure reaction between the two acyclic compounds 1-deoxy-D-xylulose-5-phosphate (DXP) and 3-amino-2-oxopropyl phosphate (1-amino-acetone-3-phosphate or AAP) to form pyridoxine 5'-phosphate (PNP) and inorganic phosphate. The sequence is that of Pyridoxine 5'-phosphate synthase from Dechloromonas aromatica (strain RCB).